Consider the following 75-residue polypeptide: Antitoxin MT0312 (75 aa).

In terms of biological role, antitoxin component of a type II toxin-antitoxin (TA) system. The sequence is that of Antitoxin MT0312 from Mycobacterium tuberculosis (strain CDC 1551 / Oshkosh).